A 158-amino-acid chain; its full sequence is NADPH-dependent 7-cyano-7-deazaguanine reductase (158 aa).

The active-site Thioimide intermediate is cysteine 56. Aspartate 63 serves as the catalytic Proton donor. Substrate contacts are provided by residues 78–80 (VES) and 97–98 (HE).

This sequence belongs to the GTP cyclohydrolase I family. QueF type 1 subfamily.

It localises to the cytoplasm. It carries out the reaction 7-aminomethyl-7-carbaguanine + 2 NADP(+) = 7-cyano-7-deazaguanine + 2 NADPH + 3 H(+). It functions in the pathway tRNA modification; tRNA-queuosine biosynthesis. Catalyzes the NADPH-dependent reduction of 7-cyano-7-deazaguanine (preQ0) to 7-aminomethyl-7-deazaguanine (preQ1). The sequence is that of NADPH-dependent 7-cyano-7-deazaguanine reductase from Rhodopseudomonas palustris (strain BisB5).